Here is a 519-residue protein sequence, read N- to C-terminus: Glycerophosphoinositol permease 1 (519 aa).

The interval 1–32 (MSDLVKSSEVIETTEVPPHNNNNNKRHFKYDS) is disordered. Residues 39-59 (LAGGVKLKDALMILCAGFALI) form a helical membrane-spanning segment. The N-linked (GlcNAc...) asparagine glycan is linked to Asn93. 3 helical membrane passes run 94-114 (ASLV…DYIG), 117-137 (WSIV…AASH), and 141-161 (VNGM…GIGA). Asn175 carries N-linked (GlcNAc...) asparagine glycosylation. The next 8 membrane-spanning stretches (helical) occupy residues 186-206 (ILAT…IFLI), 216-236 (DAIW…VFYF), 273-293 (VAWF…AGII), 313-333 (LLLG…VDIL), 337-357 (YTMM…GCGY), 363-383 (ITGL…FGPG), 404-424 (GISA…FSPI), and 432-452 (WTFI…FIFI). Residues 487 to 500 (EEEDLEGSSEDSSD) are compositionally biased toward acidic residues. A disordered region spans residues 487 to 519 (EEEDLEGSSEDSSDGEIVKNNTKNDVEKVDALK). Asn506 carries N-linked (GlcNAc...) asparagine glycosylation. The segment covering 508–519 (TKNDVEKVDALK) has biased composition (basic and acidic residues).

Belongs to the major facilitator superfamily. Sugar transporter (TC 2.A.1.1) family.

Its subcellular location is the cell membrane. It catalyses the reaction sn-glycero-3-phospho-1D-myo-inositol(out) = sn-glycero-3-phospho-1D-myo-inositol(in). Glycerophosphodiester transporter that mediates uptake of glycerophosphoinositol (GroPIns) as a source of inositol and phosphate. Does not possess detectable glycerophosphocholine (GroPCho) transport activity. Although no glycerophosphoinositol transport activity occurs in the absence of GIT1, C.albicans is still able to use glycerophosphoinositol as a phosphate source at pH 7.5, albeit slowly. Thus, a second, GIT1-independent, mechanism must exist for utilizing glycerophosphoinositol as a phosphate source at physiological pH. The expanded ability to utilize GroPIns and GroPCho results from the organism's pathogenic nature and its need to occupy a variety of environments within its host organism. This possibility is buttressed by the fact that GroPIns and GroPCho are present and abundant in human fluids. This is Glycerophosphoinositol permease 1 from Candida albicans (strain SC5314 / ATCC MYA-2876) (Yeast).